The chain runs to 196 residues: Large ribosomal subunit protein bL25 (196 aa).

This sequence belongs to the bacterial ribosomal protein bL25 family. CTC subfamily. Part of the 50S ribosomal subunit; part of the 5S rRNA/L5/L18/L25 subcomplex. Contacts the 5S rRNA. Binds to the 5S rRNA independently of L5 and L18.

Functionally, this is one of the proteins that binds to the 5S RNA in the ribosome where it forms part of the central protuberance. The protein is Large ribosomal subunit protein bL25 of Treponema pallidum subsp. pallidum (strain SS14).